A 458-amino-acid polypeptide reads, in one-letter code: MNSAISDTLTFECETGNYHTFCPISCVAWLYQKIEDSFFLVVGTKTCGYFLQNALGVMIFAEPRYAMAELEEGDISAQLNDYQELKNICLQIKKDRNPSVIVWIGTCTTEIIKMDLEGMAPRLEAEIGIPIVVARANGLDYAFTQGEDTVLAAMAQRCPEISVASKQNQPMGSAFSQTLKVSNQQDHPPLVLFGSLPSTVASQLDLELKRQSIEVSGWLPSQRYTDLPLLGEGVHVCGVNPFLSRTATTLMRRRKCKLISAPFPIGPDGTRAWIEKICSVFGIQPQGLEERENQIWDGLKDYIDLVRGKSVFFMGDNLLEVSLARFLIRCGMVVYEIGIPYMDKRYQAAELALLQKTCQDMNVPMPRIVEKPDNYNQVQRMRELQPDLAITGMAHANPLEARGISTKWSVEFTFAQIHGFTNARDILELVTRPLRRNHSLQGLGWSSLVKEQNQLIPS.

[4Fe-4S] cluster is bound by residues Cys22, Cys47, and Cys107.

Belongs to the BchN/ChlN family. In terms of assembly, protochlorophyllide reductase is composed of three subunits; ChlL, ChlN and ChlB. Forms a heterotetramer of two ChlB and two ChlN subunits. [4Fe-4S] cluster is required as a cofactor.

The protein resides in the plastid. Its subcellular location is the chloroplast. The enzyme catalyses chlorophyllide a + oxidized 2[4Fe-4S]-[ferredoxin] + 2 ADP + 2 phosphate = protochlorophyllide a + reduced 2[4Fe-4S]-[ferredoxin] + 2 ATP + 2 H2O. The protein operates within porphyrin-containing compound metabolism; chlorophyll biosynthesis (light-independent). In terms of biological role, component of the dark-operative protochlorophyllide reductase (DPOR) that uses Mg-ATP and reduced ferredoxin to reduce ring D of protochlorophyllide (Pchlide) to form chlorophyllide a (Chlide). This reaction is light-independent. The NB-protein (ChlN-ChlB) is the catalytic component of the complex. The polypeptide is Light-independent protochlorophyllide reductase subunit N (Chaetosphaeridium globosum (Charophycean green alga)).